A 357-amino-acid polypeptide reads, in one-letter code: Cytochrome c peroxidase, mitochondrial (357 aa).

A mitochondrion-targeting transit peptide spans 1 to 23 (MSATALRIAPIASRTFQRRLGYL). H116 (proton acceptor) is an active-site residue. Residues 189 to 212 (PWRSGRTDLPEDMTPDNGRLPDGD) form a disordered region. H239 contributes to the heme b binding site. W255 acts as the Tryptophan radical intermediate in catalysis.

Belongs to the peroxidase family. Cytochrome c peroxidase subfamily. Forms a one-to-one complex with cytochrome c. The cofactor is heme b.

The protein localises to the mitochondrion matrix. The protein resides in the mitochondrion intermembrane space. The catalysed reaction is 2 Fe(II)-[cytochrome c] + H2O2 + 2 H(+) = 2 Fe(III)-[cytochrome c] + 2 H2O. Destroys radicals which are normally produced within the cells and which are toxic to biological systems. The chain is Cytochrome c peroxidase, mitochondrial from Candida glabrata (strain ATCC 2001 / BCRC 20586 / JCM 3761 / NBRC 0622 / NRRL Y-65 / CBS 138) (Yeast).